Reading from the N-terminus, the 583-residue chain is Zinc finger protein 277 (583 aa).

C2H2-type zinc fingers lie at residues 351–375 (LQCLYCEKTFRDKNTLKDHMRKKQH) and 482–508 (HQCKCYSCHVKFKSKADLRTHMEDTKH).

Belongs to the ZNF277 family. As to quaternary structure, interacts (via zinc-finger domains) with RPS2/40S ribosomal protein S2, perhaps as nascent RPS2 is synthesized during translation; the interaction is direct; the interaction is extra-ribosomal. Interaction with RPS2 competes with the binding of RPS2 to protein arginine methyltransferase PRMT3. Interacts with Polycomb group (PcG) complex protein BMI1. May be part of a complex including at least ZNF277, BMI1 and RNF2/RING2.

It localises to the nucleus. Its subcellular location is the cytoplasm. The protein resides in the nucleolus. The protein localises to the chromosome. Its function is as follows. Probable transcription factor. Involved in modulation of cellular senescence; represses transcription of the tumor suppressor gene INK4A/ARF, perhaps acting via the Polycomb group (PcG) complex PRC1. The protein is Zinc finger protein 277 of Mus musculus (Mouse).